The sequence spans 205 residues: ATP synthase subunit b (205 aa).

The helical transmembrane segment at 51 to 69 threads the bilayer; that stretch reads FAWRCLDFAVLLAIVVWAL.

The protein belongs to the ATPase B chain family. In terms of assembly, F-type ATPases have 2 components, F(1) - the catalytic core - and F(0) - the membrane proton channel. F(1) has five subunits: alpha(3), beta(3), gamma(1), delta(1), epsilon(1). F(0) has three main subunits: a(1), b(2) and c(10-14). The alpha and beta chains form an alternating ring which encloses part of the gamma chain. F(1) is attached to F(0) by a central stalk formed by the gamma and epsilon chains, while a peripheral stalk is formed by the delta and b chains.

Its subcellular location is the cell inner membrane. Functionally, f(1)F(0) ATP synthase produces ATP from ADP in the presence of a proton or sodium gradient. F-type ATPases consist of two structural domains, F(1) containing the extramembraneous catalytic core and F(0) containing the membrane proton channel, linked together by a central stalk and a peripheral stalk. During catalysis, ATP synthesis in the catalytic domain of F(1) is coupled via a rotary mechanism of the central stalk subunits to proton translocation. Its function is as follows. Component of the F(0) channel, it forms part of the peripheral stalk, linking F(1) to F(0). This chain is ATP synthase subunit b, found in Geotalea uraniireducens (strain Rf4) (Geobacter uraniireducens).